The following is a 57-amino-acid chain: Protein Ric1 (57 aa).

2 consecutive transmembrane segments (helical) span residues 8–28 (IPRL…QVGC) and 34–54 (INCL…VYIL).

Belongs to the UPF0057 (PMP3) family.

Its subcellular location is the membrane. The protein is Protein Ric1 (RIC1) of Phytophthora infestans (Potato late blight agent).